The sequence spans 456 residues: Hydroxyproline dehydrogenase (456 aa).

N6-acetyllysine occurs at positions 310 and 320.

This sequence belongs to the proline oxidase family. Requires FAD as cofactor.

It carries out the reaction trans-4-hydroxy-L-proline + a quinone = (3R,5S)-1-pyrroline-3-hydroxy-5-carboxylate + a quinol + H(+). The enzyme catalyses L-proline + a quinone = (S)-1-pyrroline-5-carboxylate + a quinol + H(+). Its function is as follows. Dehydrogenase that converts trans-4-L-hydroxyproline to delta-1-pyrroline-3-hydroxy-5-carboxylate (Hyp) using ubiquinone-10 as the terminal electron acceptor. Can also use proline as a substrate but with a very much lower efficiency. Does not react with other diastereomers of Hyp: trans-4-D-hydroxyproline and cis-4-L-hydroxyproline. Ubiquininone analogs such as menadione, duroquinone and ubiquinone-1 react more efficiently than oxygen as the terminal electron acceptor during catalysis. The sequence is that of Hydroxyproline dehydrogenase from Mus musculus (Mouse).